Consider the following 740-residue polypeptide: Elongation factor 2 (740 aa).

The tr-type G domain occupies 23-264 (AQIRNAGTLA…MIIEHIPPPN (242 aa)). Residues 32-39 (AHVDHGKT), 98-102 (DTPGH), and 152-155 (NKID) contribute to the GTP site. A Diphthamide modification is found at His605.

The protein belongs to the TRAFAC class translation factor GTPase superfamily. Classic translation factor GTPase family. EF-G/EF-2 subfamily.

Its subcellular location is the cytoplasm. In terms of biological role, catalyzes the GTP-dependent ribosomal translocation step during translation elongation. During this step, the ribosome changes from the pre-translocational (PRE) to the post-translocational (POST) state as the newly formed A-site-bound peptidyl-tRNA and P-site-bound deacylated tRNA move to the P and E sites, respectively. Catalyzes the coordinated movement of the two tRNA molecules, the mRNA and conformational changes in the ribosome. The sequence is that of Elongation factor 2 from Pyrobaculum aerophilum (strain ATCC 51768 / DSM 7523 / JCM 9630 / CIP 104966 / NBRC 100827 / IM2).